Reading from the N-terminus, the 381-residue chain is Homoserine O-succinyltransferase (381 aa).

One can recognise an AB hydrolase-1 domain in the interval 45–360; sequence NAVLVCHALN…PHGHDAFLLD (316 aa). S151 functions as the Nucleophile in the catalytic mechanism. R221 is a binding site for substrate. Active-site residues include D321 and H354. D355 provides a ligand contact to substrate.

This sequence belongs to the AB hydrolase superfamily. MetX family. As to quaternary structure, homodimer.

It localises to the cytoplasm. The catalysed reaction is L-homoserine + succinyl-CoA = O-succinyl-L-homoserine + CoA. Its pathway is amino-acid biosynthesis; L-methionine biosynthesis via de novo pathway; O-succinyl-L-homoserine from L-homoserine: step 1/1. Its function is as follows. Transfers a succinyl group from succinyl-CoA to L-homoserine, forming succinyl-L-homoserine. This Burkholderia lata (strain ATCC 17760 / DSM 23089 / LMG 22485 / NCIMB 9086 / R18194 / 383) protein is Homoserine O-succinyltransferase.